Here is a 569-residue protein sequence, read N- to C-terminus: Probable pyruvate decarboxylase Pdc101 (569 aa).

Residues D33 and H120 each coordinate substrate. S233 bears the Phosphoserine mark. The thiamine pyrophosphate binding stretch occupies residues D396–I478. Positions 446, 473, and 475 each coordinate Mg(2+). E479 serves as a coordination point for substrate. T521 is modified (phosphothreonine). At S522 the chain carries Phosphoserine.

This sequence belongs to the TPP enzyme family. Homotetramer. It depends on a metal cation as a cofactor. Requires thiamine diphosphate as cofactor.

The catalysed reaction is a 2-oxocarboxylate + H(+) = an aldehyde + CO2. This Schizosaccharomyces pombe (strain 972 / ATCC 24843) (Fission yeast) protein is Probable pyruvate decarboxylase Pdc101 (pdc101).